The primary structure comprises 380 residues: Tetratricopeptide repeat protein 19, mitochondrial (380 aa).

The transit peptide at 1 to 70 (MFRLLSWSLG…AALAWFSRPA (70 aa)) directs the protein to the mitochondrion. 5 TPR repeats span residues 136–169 (TYTY…LLGG), 179–212 (IEIS…LEEK), 237–270 (GMCL…SEEI), 279–312 (IVLM…ARQI), and 318–351 (HMVL…AKLK).

The protein belongs to the TTC19 family. In terms of assembly, binds to the mature mitochondrial complex III dimer, after the incorporation of the Rieske protein UQCRFS1. Interacts with UQCRC1 and UQCRFS1. Interacts with ZFYVE26 and CHMP4B. Post-translationally, proteolytically cleaved by PARL.

Its subcellular location is the mitochondrion inner membrane. In terms of biological role, required for the preservation of the structural and functional integrity of mitochondrial respiratory complex III by allowing the physiological turnover of the Rieske protein UQCRFS1. Involved in the clearance of UQCRFS1 N-terminal fragments, which are produced upon incorporation of UQCRFS1 into the complex III and whose presence is detrimental for its catalytic activity. The sequence is that of Tetratricopeptide repeat protein 19, mitochondrial (TTC19) from Homo sapiens (Human).